The sequence spans 120 residues: UPF0231 protein YacL (120 aa).

It belongs to the UPF0231 family.

The protein is UPF0231 protein YacL (yacL) of Shigella flexneri.